The chain runs to 176 residues: Large ribosomal subunit protein uL6 (176 aa).

Belongs to the universal ribosomal protein uL6 family. As to quaternary structure, part of the 50S ribosomal subunit.

This protein binds to the 23S rRNA, and is important in its secondary structure. It is located near the subunit interface in the base of the L7/L12 stalk, and near the tRNA binding site of the peptidyltransferase center. The sequence is that of Large ribosomal subunit protein uL6 from Burkholderia vietnamiensis (strain G4 / LMG 22486) (Burkholderia cepacia (strain R1808)).